A 336-amino-acid polypeptide reads, in one-letter code: Dihydroorotate dehydrogenase (quinone) (336 aa).

Residues 62-66 (AGLDK) and Thr-86 contribute to the FMN site. Lys-66 is a binding site for substrate. A substrate-binding site is contributed by 111–115 (NRMGF). The FMN site is built by Asn-139 and Asn-172. Asn-172 contributes to the substrate binding site. Ser-175 (nucleophile) is an active-site residue. Residue Asn-177 coordinates substrate. FMN is bound by residues Lys-217 and Thr-245. 246-247 (NT) contributes to the substrate binding site. FMN-binding positions include Gly-268, Gly-297, and 318 to 319 (YS).

Belongs to the dihydroorotate dehydrogenase family. Type 2 subfamily. In terms of assembly, monomer. FMN serves as cofactor.

It is found in the cell membrane. The catalysed reaction is (S)-dihydroorotate + a quinone = orotate + a quinol. It participates in pyrimidine metabolism; UMP biosynthesis via de novo pathway; orotate from (S)-dihydroorotate (quinone route): step 1/1. Functionally, catalyzes the conversion of dihydroorotate to orotate with quinone as electron acceptor. This is Dihydroorotate dehydrogenase (quinone) from Enterobacter sp. (strain 638).